Here is a 178-residue protein sequence, read N- to C-terminus: uncharacterized protein (178 aa).

The N-terminal stretch at Met1–Gly19 is a signal peptide.

This is an uncharacterized protein from Bacillus subtilis (strain 168).